The sequence spans 394 residues: Phosphoglycerate kinase (394 aa).

Substrate is bound by residues 21–23 (DLN), Arg-37, 60–63 (HLGR), Arg-115, and Arg-148. ATP contacts are provided by residues Lys-199, Glu-321, and 347-350 (GGDT).

This sequence belongs to the phosphoglycerate kinase family. In terms of assembly, monomer.

The protein resides in the cytoplasm. The enzyme catalyses (2R)-3-phosphoglycerate + ATP = (2R)-3-phospho-glyceroyl phosphate + ADP. Its pathway is carbohydrate degradation; glycolysis; pyruvate from D-glyceraldehyde 3-phosphate: step 2/5. This Aromatoleum aromaticum (strain DSM 19018 / LMG 30748 / EbN1) (Azoarcus sp. (strain EbN1)) protein is Phosphoglycerate kinase.